The following is a 515-amino-acid chain: Endoglucanase 2 (515 aa).

Residues 1–31 (MVAKPRSRCCCCSVFIGVIILIAIIIAVIFT) form the signal peptide. A glycan (N-linked (GlcNAc...) asparagine) is linked at Asn37. Asp100 acts as the Nucleophile in catalysis. N-linked (GlcNAc...) asparagine glycosylation occurs at Asn250. The active site involves His433. Asn475 carries an N-linked (GlcNAc...) asparagine glycan. Asp480 is a catalytic residue. Asn483 carries an N-linked (GlcNAc...) asparagine glycan. Residue Glu489 is part of the active site.

It belongs to the glycosyl hydrolase 9 (cellulase E) family.

Its subcellular location is the secreted. The enzyme catalyses Endohydrolysis of (1-&gt;4)-beta-D-glucosidic linkages in cellulose, lichenin and cereal beta-D-glucans.. The chain is Endoglucanase 2 from Arabidopsis thaliana (Mouse-ear cress).